Consider the following 472-residue polypeptide: Probable low-salt glycan biosynthesis flippase Agl15 (472 aa).

The next 13 membrane-spanning stretches (helical) occupy residues 8–28 (IKLFIANIFGAGLQFLGITFF), 38–58 (GVFFLFQALLGIVAIPADFGL), 77–97 (SSAIILKLIPISLIILSIVVF), 109–129 (FAVYLALAIILQETAQLAVSV), 164–184 (AEALIYSLLAGMVVTLAWGLS), 209–229 (VVSSIGGYFYSWMDVAIIGIF), 244–264 (VTAITMLFSQAVASTIFPQVS), 289–309 (LVIPAFFGILVFSDEIMGIVF), 315–335 (IASYVLIILAGEKILQSVHVI), 354–374 (VISVVLNLILNVILILSFGIV), 375–395 (GAAVATALSFAVNTVLHAHYL), 408–428 (IGWCTVSSLIMAGVLFGFKTL), and 434–454 (LIQLFIGIFFGMLVYTTITLL).

This sequence belongs to the AglR/Agl15 family.

It is found in the cell membrane. Its pathway is protein modification; protein glycosylation. The protein operates within cell surface structure biogenesis; S-layer biogenesis. Flippase involved in N-glycan biosynthetic pathway that takes place under low-salt conditions (1.75 M instead of 3.4 M). Participates in the formation of the tetrasaccharide present at 'Asn-532' of S-layer glycoprotein Csg, consisting of a sulfated hexose, 2 hexoses and rhamnose. Probably moves the tetrasaccharide from the cytosolic to the extracytosolic side of the membrane. The chain is Probable low-salt glycan biosynthesis flippase Agl15 (agl15) from Haloferax volcanii (strain ATCC 29605 / DSM 3757 / JCM 8879 / NBRC 14742 / NCIMB 2012 / VKM B-1768 / DS2) (Halobacterium volcanii).